The following is an 849-amino-acid chain: Membrane protein-large ribosomal subunit bL9 fusion protein (849 aa).

Positions 1-680 (MFSKNKHNTK…TQLEGTNIKT (680 aa)) are unknown. 2 consecutive transmembrane segments (helical) span residues 11–31 (FIVIACVIVVLILILFCLDFQ) and 64–84 (IIFFIFNFFGKIILASFVISF). Positions 214 to 342 (KTLALAMITF…GGDQVVVNIE (129 aa)) constitute a GGDEF domain. Positions 681–849 (VTDTLKHFLK…FLNVTERKSK (169 aa)) are large ribosomal subunit protein bL9.

This sequence belongs to the bacterial ribosomal protein bL9 family.

Its subcellular location is the cell membrane. In terms of biological role, binds to the 23S rRNA. The protein is Membrane protein-large ribosomal subunit bL9 fusion protein of Onion yellows phytoplasma (strain OY-M).